The chain runs to 58 residues: Large ribosomal subunit protein uL30 (58 aa).

It belongs to the universal ribosomal protein uL30 family. In terms of assembly, part of the 50S ribosomal subunit.

This is Large ribosomal subunit protein uL30 from Pseudomonas putida (strain ATCC 700007 / DSM 6899 / JCM 31910 / BCRC 17059 / LMG 24140 / F1).